The primary structure comprises 289 residues: ATP synthase mitochondrial F1 complex assembly factor 2 (289 aa).

The transit peptide at 1–40 (MWRRCLRLRDVGRRLLNLPRSGLTASEGLGPKLPTPIRAY) directs the protein to the mitochondrion. N6-succinyllysine is present on K133.

Belongs to the ATP12 family. Interacts with ATP5F1B; involved in the assembly of the F1 component of the mitochondrial ATP synthase (ATPase). Interacts with FMC1.

It localises to the mitochondrion inner membrane. Plays a role in the assembly of the F1 component of the mitochondrial ATP synthase (ATPase). This chain is ATP synthase mitochondrial F1 complex assembly factor 2 (ATPAF2), found in Bos taurus (Bovine).